A 387-amino-acid polypeptide reads, in one-letter code: Beta-carotene 4-ketolase (387 aa).

The segment at 1–78 (MPHSIDMEDS…GNPTVDDASQ (78 aa)) is disordered. Composition is skewed to polar residues over residues 43 to 53 (NWQTQYHSSEG) and 65 to 78 (DATT…DASQ).

The catalysed reaction is echinenone + 2 AH2 + 2 O2 = canthaxanthin + 2 A + 3 H2O. It carries out the reaction all-trans-beta-carotene + 2 AH2 + 2 O2 = echinenone + 2 A + 3 H2O. It participates in carotenoid biosynthesis. Functionally, involved in the biosynthesis of ketocarotenoids which are powerful anti-oxidative molecules. Catalyzes the conversion of beta-carotene to canthaxanthin via echinenone. The chain is Beta-carotene 4-ketolase from Protosiphon botryoides (Green alga).